The chain runs to 344 residues: Anthranilate phosphoribosyltransferase (344 aa).

Residues G80, 83–84, T88, 90–93, 108–116, and S120 contribute to the 5-phospho-alpha-D-ribose 1-diphosphate site; these read GD, NVST, and KHGNRSVSS. G80 lines the anthranilate pocket. Residue S92 participates in Mg(2+) binding. An anthranilate-binding site is contributed by N111. Position 166 (R166) interacts with anthranilate. Residues D225 and E226 each contribute to the Mg(2+) site.

It belongs to the anthranilate phosphoribosyltransferase family. Homodimer. It depends on Mg(2+) as a cofactor.

It carries out the reaction N-(5-phospho-beta-D-ribosyl)anthranilate + diphosphate = 5-phospho-alpha-D-ribose 1-diphosphate + anthranilate. Its pathway is amino-acid biosynthesis; L-tryptophan biosynthesis; L-tryptophan from chorismate: step 2/5. In terms of biological role, catalyzes the transfer of the phosphoribosyl group of 5-phosphorylribose-1-pyrophosphate (PRPP) to anthranilate to yield N-(5'-phosphoribosyl)-anthranilate (PRA). The protein is Anthranilate phosphoribosyltransferase of Legionella pneumophila (strain Corby).